A 293-amino-acid polypeptide reads, in one-letter code: Nucleotide-binding protein cauri_1197 (293 aa).

16 to 23 (GMSGGGLT) serves as a coordination point for ATP. A GTP-binding site is contributed by 67-70 (DVRS).

This sequence belongs to the RapZ-like family.

Its function is as follows. Displays ATPase and GTPase activities. In Corynebacterium aurimucosum (strain ATCC 700975 / DSM 44827 / CIP 107346 / CN-1) (Corynebacterium nigricans), this protein is Nucleotide-binding protein cauri_1197.